We begin with the raw amino-acid sequence, 699 residues long: Integrator complex subunit 10 (699 aa).

Phosphoserine is present on residues Ser220 and Ser370. Lys453 participates in a covalent cross-link: Glycyl lysine isopeptide (Lys-Gly) (interchain with G-Cter in SUMO2).

This sequence belongs to the Integrator subunit 10 family. Component of the Integrator complex, composed of core subunits INTS1, INTS2, INTS3, INTS4, INTS5, INTS6, INTS7, INTS8, INTS9/RC74, INTS10, INTS11/CPSF3L, INTS12, INTS13, INTS14 and INTS15. The core complex associates with protein phosphatase 2A subunits PPP2CA and PPP2R1A, to form the Integrator-PP2A (INTAC) complex. INTS10 is part of the tail subcomplex, composed of INTS10, INTS13, INTS14 and INTS15.

It localises to the nucleus. Component of the integrator complex, a multiprotein complex that terminates RNA polymerase II (Pol II) transcription in the promoter-proximal region of genes. The integrator complex provides a quality checkpoint during transcription elongation by driving premature transcription termination of transcripts that are unfavorably configured for transcriptional elongation: the complex terminates transcription by (1) catalyzing dephosphorylation of the C-terminal domain (CTD) of Pol II subunit POLR2A/RPB1 and SUPT5H/SPT5, (2) degrading the exiting nascent RNA transcript via endonuclease activity and (3) promoting the release of Pol II from bound DNA. The integrator complex is also involved in terminating the synthesis of non-coding Pol II transcripts, such as enhancer RNAs (eRNAs), small nuclear RNAs (snRNAs), telomerase RNAs and long non-coding RNAs (lncRNAs). Within the integrator complex, INTS10 is part of the integrator tail module that acts as a platform for the recruitment of transcription factors at promoters. May be not involved in the recruitment of cytoplasmic dynein to the nuclear envelope, probably as component of the integrator complex. This Macaca fascicularis (Crab-eating macaque) protein is Integrator complex subunit 10 (INTS10).